Reading from the N-terminus, the 93-residue chain is Small ribosomal subunit protein uS19 (93 aa).

This sequence belongs to the universal ribosomal protein uS19 family.

Protein S19 forms a complex with S13 that binds strongly to the 16S ribosomal RNA. In Wolinella succinogenes (strain ATCC 29543 / DSM 1740 / CCUG 13145 / JCM 31913 / LMG 7466 / NCTC 11488 / FDC 602W) (Vibrio succinogenes), this protein is Small ribosomal subunit protein uS19.